We begin with the raw amino-acid sequence, 767 residues long: DNA topoisomerase 1 (767 aa).

Residues 1–23 (MSGDHLHNDSQIEADFRLNDSHK) show a composition bias toward basic and acidic residues. The segment at 1 to 201 (MSGDHLHNDS…NKKKKPKKEE (201 aa)) is disordered. Serine 2 carries the N-acetylserine modification. Serine 2 and serine 10 each carry phosphoserine. Residues 24 to 39 (HKDKHKDREHRHKEHK) show a composition bias toward basic residues. The span at 40–110 (KDKDKDREKS…DAKIKKEKEN (71 aa)) shows a compositional bias: basic and acidic residues. Serine 59 is subject to Phosphoserine. Lysine 103 participates in a covalent cross-link: Glycyl lysine isopeptide (Lys-Gly) (interchain with G-Cter in SUMO2). Lysine 105 is covalently cross-linked (Glycyl lysine isopeptide (Lys-Gly) (interchain with G-Cter in SUMO); alternate). Residue lysine 105 forms a Glycyl lysine isopeptide (Lys-Gly) (interchain with G-Cter in SUMO2); alternate linkage. Position 114 is a phosphoserine (serine 114). Lysine 119 is covalently cross-linked (Glycyl lysine isopeptide (Lys-Gly) (interchain with G-Cter in SUMO); alternate). Lysine 119 participates in a covalent cross-link: Glycyl lysine isopeptide (Lys-Gly) (interchain with G-Cter in SUMO2); alternate. Lysine 119 participates in a covalent cross-link: Glycyl lysine isopeptide (Lys-Gly) (interchain with G-Cter in SUMO1); alternate. Over residues 131-168 (PKEDIKPLKRLRDEDDADYKPKKIKTEDIKKEKKRKSE) the composition is skewed to basic and acidic residues. Glycyl lysine isopeptide (Lys-Gly) (interchain with G-Cter in SUMO2) cross-links involve residues lysine 136 and lysine 150. Lysine 155 is covalently cross-linked (Glycyl lysine isopeptide (Lys-Gly) (interchain with G-Cter in SUMO); alternate). Lysine 155 is covalently cross-linked (Glycyl lysine isopeptide (Lys-Gly) (interchain with G-Cter in SUMO2); alternate). Glycyl lysine isopeptide (Lys-Gly) (interchain with G-Cter in SUMO2) cross-links involve residues lysine 160 and lysine 166. Lysine 174 participates in a covalent cross-link: Glycyl lysine isopeptide (Lys-Gly) (interchain with G-Cter in SUMO2); alternate. An N6-acetyllysine; alternate modification is found at lysine 174. Positions 181 to 201 (KDKDKKVAEPDNKKKKPKKEE) are enriched in basic and acidic residues. A Glycyl lysine isopeptide (Lys-Gly) (interchain with G-Cter in SUMO2) cross-link involves residue lysine 206. Lysine 282 is modified (N6-acetyllysine). Residue lysine 338 forms a Glycyl lysine isopeptide (Lys-Gly) (interchain with G-Cter in SUMO2) linkage. 2 interaction with DNA regions span residues 427 to 428 (KY) and 490 to 495 (RAGNEK). In terms of domain architecture, Topo IB-type catalytic spans 434 to 767 (SSRIKGEKDW…IDMTDEDYEF (334 aa)). The residue at position 508 (serine 508) is a Phosphoserine; by CK2. Lysine 551 participates in a covalent cross-link: Glycyl lysine isopeptide (Lys-Gly) (interchain with G-Cter in SUMO2). Residues 587–589 (TAK) form an interaction with DNA region. Glycyl lysine isopeptide (Lys-Gly) (interchain with G-Cter in SUMO2) cross-links involve residues lysine 644, lysine 702, and lysine 714. Tyrosine 725 functions as the O-(3'-phospho-DNA)-tyrosine intermediate in the catalytic mechanism.

Belongs to the type IB topoisomerase family. Monomer. Interacts with ERCC6. Interacts with TPRN; TPRN interacts with a number of DNA damage response proteins, is recruited to sites of DNA damage and may play a role in DNA damage repair. Post-translationally, sumoylated. Lys-119 is the main site of sumoylation. Sumoylation plays a role in partitioning TOP1 between nucleoli and nucleoplasm. Levels are dramatically increased on camptothecin (CPT) treatment. In terms of processing, phosphorylation at Ser-508 by CK2 increases binding to supercoiled DNA and sensitivity to camptothecin.

Its subcellular location is the nucleus. The protein resides in the nucleolus. It localises to the nucleoplasm. The enzyme catalyses ATP-independent breakage of single-stranded DNA, followed by passage and rejoining.. Functionally, releases the supercoiling and torsional tension of DNA introduced during the DNA replication and transcription by transiently cleaving and rejoining one strand of the DNA duplex. Introduces a single-strand break via transesterification at a target site in duplex DNA. The scissile phosphodiester is attacked by the catalytic tyrosine of the enzyme, resulting in the formation of a DNA-(3'-phosphotyrosyl)-enzyme intermediate and the expulsion of a 5'-OH DNA strand. The free DNA strand then rotates around the intact phosphodiester bond on the opposing strand, thus removing DNA supercoils. Finally, in the religation step, the DNA 5'-OH attacks the covalent intermediate to expel the active-site tyrosine and restore the DNA phosphodiester backbone. Regulates the alternative splicing of tissue factor (F3) pre-mRNA in endothelial cells. Involved in the circadian transcription of the core circadian clock component BMAL1 by altering the chromatin structure around the ROR response elements (ROREs) on the BMAL1 promoter. The protein is DNA topoisomerase 1 (Top1) of Mus musculus (Mouse).